A 274-amino-acid polypeptide reads, in one-letter code: Phosphoribosylaminoimidazole-succinocarboxamide synthase (274 aa).

The protein belongs to the SAICAR synthetase family.

It carries out the reaction 5-amino-1-(5-phospho-D-ribosyl)imidazole-4-carboxylate + L-aspartate + ATP = (2S)-2-[5-amino-1-(5-phospho-beta-D-ribosyl)imidazole-4-carboxamido]succinate + ADP + phosphate + 2 H(+). The protein operates within purine metabolism; IMP biosynthesis via de novo pathway; 5-amino-1-(5-phospho-D-ribosyl)imidazole-4-carboxamide from 5-amino-1-(5-phospho-D-ribosyl)imidazole-4-carboxylate: step 1/2. In Nitrosopumilus maritimus (strain SCM1), this protein is Phosphoribosylaminoimidazole-succinocarboxamide synthase.